Here is a 250-residue protein sequence, read N- to C-terminus: Mediator of RNA polymerase II transcription subunit 8 (250 aa).

The interval 217–250 is disordered; that stretch reads SPMSAVSPGAGPLGKMPSGIKTNIKSANQVHPYR. Polar residues predominate over residues 236–250; the sequence is IKTNIKSANQVHPYR.

The protein belongs to the Mediator complex subunit 8 family. Component of the Mediator complex.

It localises to the nucleus. In terms of biological role, component of the Mediator complex, a coactivator involved in the regulated transcription of nearly all RNA polymerase II-dependent genes. Mediator functions as a bridge to convey information from gene-specific regulatory proteins to the basal RNA polymerase II transcription machinery. Mediator is recruited to promoters by direct interactions with regulatory proteins and serves as a scaffold for the assembly of a functional preinitiation complex with RNA polymerase II and the general transcription factors. This Aedes aegypti (Yellowfever mosquito) protein is Mediator of RNA polymerase II transcription subunit 8 (MED8).